Reading from the N-terminus, the 109-residue chain is Non-structural protein of 12.7 kDa (109 aa).

Belongs to the coronaviruses ns12.7 protein family.

The protein is Non-structural protein of 12.7 kDa of Sus scrofa (Pig).